A 202-amino-acid polypeptide reads, in one-letter code: MKAFTRLDGRAAPLELANIDTDQIIPKQFLKTVEREGLAKGLFYDFRFDADGNEISDFVLNKPEYKSASVLIAGDNFGCGSSREHAPWALMDFGIMCVISTSFADIFNNNCFNNGLLPVVVSPEDLALLMDEAKGGNHMVSVDLEAQTVISPSGKTIGFDIDPVRKEKMLKGLDAIGETMMHGGDIDLFESKRAISQPWLEA.

It belongs to the LeuD family. LeuD type 1 subfamily. As to quaternary structure, heterodimer of LeuC and LeuD.

The catalysed reaction is (2R,3S)-3-isopropylmalate = (2S)-2-isopropylmalate. It participates in amino-acid biosynthesis; L-leucine biosynthesis; L-leucine from 3-methyl-2-oxobutanoate: step 2/4. Its function is as follows. Catalyzes the isomerization between 2-isopropylmalate and 3-isopropylmalate, via the formation of 2-isopropylmaleate. The sequence is that of 3-isopropylmalate dehydratase small subunit from Caulobacter vibrioides (strain ATCC 19089 / CIP 103742 / CB 15) (Caulobacter crescentus).